The following is a 200-amino-acid chain: Probable nicotinate-nucleotide adenylyltransferase (200 aa).

Belongs to the NadD family.

The catalysed reaction is nicotinate beta-D-ribonucleotide + ATP + H(+) = deamido-NAD(+) + diphosphate. The protein operates within cofactor biosynthesis; NAD(+) biosynthesis; deamido-NAD(+) from nicotinate D-ribonucleotide: step 1/1. Its function is as follows. Catalyzes the reversible adenylation of nicotinate mononucleotide (NaMN) to nicotinic acid adenine dinucleotide (NaAD). The chain is Probable nicotinate-nucleotide adenylyltransferase from Clavibacter michiganensis subsp. michiganensis (strain NCPPB 382).